The chain runs to 195 residues: Imidazoleglycerol-phosphate dehydratase (195 aa).

Belongs to the imidazoleglycerol-phosphate dehydratase family.

The protein localises to the cytoplasm. It catalyses the reaction D-erythro-1-(imidazol-4-yl)glycerol 3-phosphate = 3-(imidazol-4-yl)-2-oxopropyl phosphate + H2O. It functions in the pathway amino-acid biosynthesis; L-histidine biosynthesis; L-histidine from 5-phospho-alpha-D-ribose 1-diphosphate: step 6/9. In Methanosphaerula palustris (strain ATCC BAA-1556 / DSM 19958 / E1-9c), this protein is Imidazoleglycerol-phosphate dehydratase.